Reading from the N-terminus, the 282-residue chain is Elongation factor Ts (282 aa).

The interval 80 to 83 (TDFV) is involved in Mg(2+) ion dislocation from EF-Tu.

The protein belongs to the EF-Ts family.

The protein localises to the cytoplasm. In terms of biological role, associates with the EF-Tu.GDP complex and induces the exchange of GDP to GTP. It remains bound to the aminoacyl-tRNA.EF-Tu.GTP complex up to the GTP hydrolysis stage on the ribosome. This is Elongation factor Ts from Chlamydia trachomatis serovar L2 (strain ATCC VR-902B / DSM 19102 / 434/Bu).